A 148-amino-acid chain; its full sequence is Snaclec flavocetin-A subunit beta (148 aa).

An N-terminal signal peptide occupies residues 1 to 23; sequence MGQFIFVSFGFLVVATSLSGTEA. 3 disulfide bridges follow: Cys27/Cys38, Cys55/Cys144, and Cys121/Cys136. Residues 34–145 form the C-type lectin domain; sequence YDEHCYQVFQ…CSSKRYVVCK (112 aa).

It belongs to the snaclec family. Tetramer of heterodimers of alpha and beta subunits (alphabeta)(4); disulfide-linked. As to expression, expressed by the venom gland.

It localises to the secreted. Its function is as follows. Strong platelet aggregation inhibitor. Binds specifically to platelet glycoprotein Ibalpha (GP1BA) with high affinity and inhibits vWF-dependent platelet aggregation. Has also been observed to induce small agglutinates in washed platelets by binding to GPIb. The protein is Snaclec flavocetin-A subunit beta of Protobothrops flavoviridis (Habu).